Here is a 675-residue protein sequence, read N- to C-terminus: Methionine--tRNA ligase (675 aa).

Residues 15 to 25 (PYANGSIHLGH) carry the 'HIGH' region motif. Residues cysteine 146, cysteine 149, cysteine 159, and cysteine 162 each coordinate Zn(2+). The 'KMSKS' region signature appears at 332–336 (KMSKS). Lysine 335 contributes to the ATP binding site. The tRNA-binding domain maps to 574 to 675 (DFAKLDLRIA…AGAKPGMRVK (102 aa)).

Belongs to the class-I aminoacyl-tRNA synthetase family. MetG type 1 subfamily. In terms of assembly, homodimer. Zn(2+) is required as a cofactor.

It is found in the cytoplasm. It carries out the reaction tRNA(Met) + L-methionine + ATP = L-methionyl-tRNA(Met) + AMP + diphosphate. Functionally, is required not only for elongation of protein synthesis but also for the initiation of all mRNA translation through initiator tRNA(fMet) aminoacylation. The polypeptide is Methionine--tRNA ligase (Tolumonas auensis (strain DSM 9187 / NBRC 110442 / TA 4)).